The chain runs to 487 residues: Serine/threonine-protein kinase 4 (487 aa).

N-acetylmethionine is present on methionine 1. Threonine 3 carries the phosphothreonine modification. Positions 30-281 (FDVLEKLGEG…ATQLLQHPFV (252 aa)) constitute a Protein kinase domain. ATP-binding positions include 36–44 (LGEGSYGSV) and lysine 59. Aspartate 149 (proton acceptor) is an active-site residue. Threonine 183 bears the Phosphothreonine; by autocatalysis mark. The residue at position 265 (serine 265) is a Phosphoserine. A coiled-coil region spans residues 290 to 310 (LRDLINEAMDVKLKRQESQQR). The segment covering 303–312 (KRQESQQREV) has biased composition (basic and acidic residues). Residues 303–332 (KRQESQQREVDQDDEENSEEDEMDSGTMVR) form a disordered region. The segment covering 313 to 326 (DQDDEENSEEDEMD) has biased composition (acidic residues). Serine 320 bears the Phosphoserine mark. Phosphothreonine occurs at positions 340 and 367. Position 387 is a phosphothreonine; by PKB/AKT1 (threonine 387). Phosphoserine occurs at positions 410 and 414. Tyrosine 433 carries the phosphotyrosine modification. The SARAH domain occupies 433 to 480 (YEFLKSWTVEDLQKRLLALDPMMEQEIEEIRQKYQSKRQPILDAIEAK).

Belongs to the protein kinase superfamily. STE Ser/Thr protein kinase family. STE20 subfamily. As to quaternary structure, homodimer; mediated via the coiled-coil region. Interacts with NORE1, which inhibits autoactivation. Interacts with and stabilizes SAV1. Interacts with RASSF1. Interacts with FOXO3. Interacts with RASSF2 (via SARAH domain). Interacts with AR, PKB/AKT1, TNNI3 and SIRT1. Interacts with DLG5 (via PDZ domain 3). Interacts with MARK3 and SCRIB in the presence of DLG5. It depends on Mg(2+) as a cofactor. Post-translationally, autophosphorylated on serine and threonine residues. Phosphorylation at Thr-387 by PKB/AKT1, leads to inhibition of its: kinase activity, nuclear translocation and autophosphorylation at Thr-183. It also diminishes its cleavage by caspases and its ability to phosphorylate FOXO3. In terms of processing, proteolytically cleaved by caspase-3 during apoptosis at Asp-326 and Asp-349 resulting in a 37 kDa or a 39 kDa subunit respectively. The 39 kDa subunit is further cleaved into the 37 kDa form. Proteolytic cleavage results in kinase activation and nuclear translocation of the truncated form (MST1/N). It is less likely that cleavage at Asp-349 is a prerequisite for activation as this site is not conserved in the murine ortholog.

The protein resides in the cytoplasm. Its subcellular location is the nucleus. The enzyme catalyses L-seryl-[protein] + ATP = O-phospho-L-seryl-[protein] + ADP + H(+). The catalysed reaction is L-threonyl-[protein] + ATP = O-phospho-L-threonyl-[protein] + ADP + H(+). With respect to regulation, inhibited by the C-terminal non-catalytic region. Activated by caspase-cleavage. Full activation also requires homodimerization and autophosphorylation of Thr-183. Activated by RASSF1 which acts by preventing its dephosphorylation. In terms of biological role, stress-activated, pro-apoptotic kinase which, following caspase-cleavage, enters the nucleus and induces chromatin condensation followed by internucleosomal DNA fragmentation. Key component of the Hippo signaling pathway which plays a pivotal role in organ size control and tumor suppression by restricting proliferation and promoting apoptosis. The core of this pathway is composed of a kinase cascade wherein STK3/MST2 and STK4/MST1, in complex with its regulatory protein SAV1, phosphorylates and activates LATS1/2 in complex with its regulatory protein MOB1, which in turn phosphorylates and inactivates YAP1 oncoprotein and WWTR1/TAZ. Phosphorylation of YAP1 by LATS2 inhibits its translocation into the nucleus to regulate cellular genes important for cell proliferation, cell death, and cell migration. STK3/MST2 and STK4/MST1 are required to repress proliferation of mature hepatocytes, to prevent activation of facultative adult liver stem cells (oval cells), and to inhibit tumor formation. Phosphorylates 'Ser-14' of histone H2B (H2BS14ph) during apoptosis. Phosphorylates FOXO3 upon oxidative stress, which results in its nuclear translocation and cell death initiation. Phosphorylates MOBKL1A, MOBKL1B and RASSF2. Phosphorylates TNNI3 (cardiac Tn-I) and alters its binding affinity to TNNC1 (cardiac Tn-C) and TNNT2 (cardiac Tn-T). Phosphorylates FOXO1 on 'Ser-212' and regulates its activation and stimulates transcription of PMAIP1 in a FOXO1-dependent manner. Phosphorylates SIRT1 and inhibits SIRT1-mediated p53/TP53 deacetylation, thereby promoting p53/TP53 dependent transcription and apoptosis upon DNA damage. Acts as an inhibitor of PKB/AKT1. Phosphorylates AR on 'Ser-650' and suppresses its activity by intersecting with PKB/AKT1 signaling and antagonizing formation of AR-chromatin complexes. In Colobus guereza (Mantled guereza), this protein is Serine/threonine-protein kinase 4 (STK4).